A 264-amino-acid polypeptide reads, in one-letter code: Movement protein (264 aa).

The tract at residues 211 to 264 is disordered; that stretch reads RTKSSKRGPKNNNNLGKGRSGGRPKPKSFDEVEKEFDNLIEDEAETSVADSDSY. A compositionally biased stretch (basic and acidic residues) spans 237-247; sequence KSFDEVEKEFD.

It belongs to the tobamovirus movement protein family. Binds to host RBCS at the plasmodesmata; this interaction seems required for viral systemic movement. In resistant plants, interacts with host MBP2C at host microtubules; this interaction prevents virus cell to cell movement. In resistant plants, interacts with host resistance (R) protein (e.g. tomato ToMV resistance protein TM-2(2), AC Q71BG9) at the host plasma membrane; this interaction triggers host defense responses leading to programmed cell death.

Its subcellular location is the host cytoplasm. It localises to the host cytoskeleton. The protein resides in the host cell junction. It is found in the host plasmodesma. In terms of biological role, transports viral genome to neighboring plant cells directly through plasmosdesmata, without any budding. The movement protein allows efficient cell to cell propagation, by bypassing the host cell wall barrier. Forms a ribonucleoprotein complex with viral RNA. Binds microtubules and modulates microtubule stability. Can bind double-stranded DNA. Triggers host hypersensitive defense reaction in incompatible plants harboring resistance (R) proteins. This Antirrhinum majus (Garden snapdragon) protein is Movement protein (MP).